Consider the following 303-residue polypeptide: Glycine--tRNA ligase alpha subunit (303 aa).

It belongs to the class-II aminoacyl-tRNA synthetase family. As to quaternary structure, tetramer of two alpha and two beta subunits.

The protein resides in the cytoplasm. The enzyme catalyses tRNA(Gly) + glycine + ATP = glycyl-tRNA(Gly) + AMP + diphosphate. This is Glycine--tRNA ligase alpha subunit from Salmonella paratyphi A (strain ATCC 9150 / SARB42).